An 825-amino-acid polypeptide reads, in one-letter code: Probable ATP-dependent RNA helicase DDX20 (825 aa).

The disordered stretch occupies residues 27–50; it reads PVQAVEPTPASPWTQRTAHDIGGP. The short motif at 63–91 is the Q motif element; that stretch reads ADFESLLLSRPVLEGLRAAGFERPSPVQL. ATP-binding positions include R85, Q90, 107-114, and 110-115; these read AKSGTGKT and GTGKTC. Residues 94–265 form the Helicase ATP-binding domain; sequence IPLGRCGLDL…TRYMRDPTFV (172 aa). The residue at position 188 (S188) is a Phosphoserine. Positions 212–215 match the DEAD box motif; it reads DEAD. A Phosphoserine modification is found at S270. The region spanning 300 to 449 is the Helicase C-terminal domain; that stretch reads HLQELFSKVP…PIPPGLMEEC (150 aa). Composition is skewed to polar residues over residues 465-475 and 484-504; these read SPTVATQSPKK and FQSQ…SASA. Disordered regions lie at residues 465–573 and 642–753; these read SPTV…PGSL and QMLV…EPQE. 3 positions are modified to phosphoserine: S472, S501, and S506. Residues 508-518 show a composition bias toward basic residues; sequence RPKHSKPKLPV. The span at 547–571 shows a compositional bias: polar residues; sequence KNSVQTSVEDSSSNSQHQAKDSSPG. The residue at position 552 (T552) is a Phosphothreonine. Phosphoserine is present on residues S561, S653, S655, S657, S673, S678, and S679. Positions 646-668 are enriched in low complexity; sequence SSSQSGDSESDSDSCSSRTSSQS. T689 and T706 each carry phosphothreonine. Residues 698-711 are compositionally biased toward polar residues; the sequence is EQVQNGNDTPTQVE. The segment covering 733–744 has biased composition (basic residues); it reads KQSRRNPARRSS.

It belongs to the DEAD box helicase family. DDX20 subfamily. In terms of assembly, part of the core SMN complex that contains SMN1, GEMIN2/SIP1, DDX20/GEMIN3, GEMIN4, GEMIN5, GEMIN6, GEMIN7, GEMIN8 and STRAP/UNRIP. Part of the SMN-Sm complex that contains SMN1, GEMIN2/SIP1, DDX20/GEMIN3, GEMIN4, GEMIN5, GEMIN6, GEMIN7, GEMIN8, STRAP/UNRIP and the Sm proteins SNRPB, SNRPD1, SNRPD2, SNRPD3, SNRPE, SNRPF and SNRPG. Interacts with SMN1; the interaction is direct. Interacts with GEMIN4; the interaction is direct. Interacts with GEMIN5. Interacts with SNUPN; the interaction is direct. Interacts with PPP4R2. Interacts with FOXL2. Interacts with NANOS1 and PUM2.

It is found in the cytoplasm. The protein resides in the nucleus. Its subcellular location is the gem. It carries out the reaction ATP + H2O = ADP + phosphate + H(+). The catalysed reaction is a ribonucleoside 5'-triphosphate + H2O = a ribonucleoside 5'-diphosphate + phosphate + H(+). The SMN complex catalyzes the assembly of small nuclear ribonucleoproteins (snRNPs), the building blocks of the spliceosome, and thereby plays an important role in the splicing of cellular pre-mRNAs. Most spliceosomal snRNPs contain a common set of Sm proteins SNRPB, SNRPD1, SNRPD2, SNRPD3, SNRPE, SNRPF and SNRPG that assemble in a heptameric protein ring on the Sm site of the small nuclear RNA to form the core snRNP (Sm core). In the cytosol, the Sm proteins SNRPD1, SNRPD2, SNRPE, SNRPF and SNRPG are trapped in an inactive 6S pICln-Sm complex by the chaperone CLNS1A that controls the assembly of the core snRNP. To assemble core snRNPs, the SMN complex accepts the trapped 5Sm proteins from CLNS1A forming an intermediate. Binding of snRNA inside 5Sm triggers eviction of the SMN complex, thereby allowing binding of SNRPD3 and SNRPB to complete assembly of the core snRNP. May also play a role in the metabolism of small nucleolar ribonucleoprotein (snoRNPs). This is Probable ATP-dependent RNA helicase DDX20 (Ddx20) from Mus musculus (Mouse).